A 541-amino-acid chain; its full sequence is Metal transporter Nramp1 (541 aa).

N-linked (GlcNAc...) asparagine glycosylation is present at Asn17. The next 10 helical transmembrane spans lie at 45 to 65 (LFAY…PGNF), 78 to 98 (ELLW…SLAA), 122 to 142 (FILW…EVIG), 153 to 173 (IPVW…LALQ), 182 to 202 (LFIA…LGYA), 222 to 242 (GAAG…NLFL), 271 to 291 (GFAL…SGAV), 315 to 335 (FLLE…ALLA), 371 to 391 (SLAI…GAGK), and 392 to 412 (LIII…VPLL). The N-linked (GlcNAc...) asparagine glycan is linked to Asn426. The next 2 helical transmembrane spans lie at 430 to 450 (ISSI…YYLA) and 465 to 485 (VAAI…LAGV). An N-linked (GlcNAc...) asparagine glycan is attached at Asn511.

The protein belongs to the NRAMP (TC 2.A.55) family.

The protein localises to the membrane. In terms of biological role, probable divalent metal transporter. The sequence is that of Metal transporter Nramp1 from Populus trichocarpa (Western balsam poplar).